Here is a 160-residue protein sequence, read N- to C-terminus: Succinate dehydrogenase assembly factor 2-A, mitochondrial (160 aa).

Residues 1–30 (MLRQLKLTLNISRWIFMPWQRQASASSSQV) constitute a mitochondrion transit peptide.

Belongs to the SDHAF2 family. In terms of assembly, interacts with the flavoprotein subunit within the SDH catalytic dimer.

It localises to the mitochondrion matrix. Its function is as follows. Plays an essential role in the assembly of succinate dehydrogenase (SDH), an enzyme complex (also referred to as respiratory complex II) that is a component of both the tricarboxylic acid (TCA) cycle and the mitochondrial electron transport chain, and which couples the oxidation of succinate to fumarate with the reduction of ubiquinone (coenzyme Q) to ubiquinol. Required for flavinylation (covalent attachment of FAD) of the flavoprotein subunit of the SDH catalytic dimer. The sequence is that of Succinate dehydrogenase assembly factor 2-A, mitochondrial from Drosophila persimilis (Fruit fly).